We begin with the raw amino-acid sequence, 918 residues long: MLPKLLTSIFGSRNERLLKQYRRVVDQINALEPQFEQLGDDELRAKTEAFKQRVADGETLDQLLPEAFAVVREGSKRALKMRHFDVQLIGGMTLHNGKIGEMRTGEGKTLMATLPVYLNALAGKGVHVVTVNDYLARRDAEWMGRLYNFLGLTVGVNGPQMTREAKQAAYAADVTYGTNNEFGFDYLRDNMVTEVADRVQRSLNFAIVDEVDSILIDEARTPLIISGQAEDQTELYLRINAVAPLLKKQIGEADPRTGEGVIEAGDFTADEKTHQVVLTEAGHEHAEALLAQAGLLVEGASLYDAANITLMHHLYAALRARHLYHRDQHYVVQNGEVVIVDEFTGRLMTGRRWSDGLHQAVEAKEGVPIQAENQTLASITFQNYFRMYGKLAGMTGTADTEAYEFQEIYGLETVVIPPNKPTQRRDELDLVYKTSRERYEAVVKDIQDCYERGQPVLVGTTSIENSELISKLLEKYKLPHEVLNAKQHAREAEIIAQAGRPKAVTIATNMAGRGTDIVLGGNVEKQVQFIEADDAIPADDKLRRIQQLKDEWAGLHEQVKAAGGLRIVATERHESRRIDNQLRGRSGRQGDPGASRFYLSLEDPLMRIFAGDRVKAIMERLKMPDGEAIEAGIVSRSIEGAQRKVEARNFDIRKQLLEYDDVSNDQRKVIYQQRNDILESKELGAQIAHLRRGAMTDVVRTFVPVESVEEQWDIPGLEKVLRDEWQLDVPIAAQVDKSDAITDEDLVEMVAKTADETYAGKVALVGEEQFSGFERAVLLQSIDTHWREHLAALDYLRQGIHLRGYAQKNPKQEYKREAFELFSTLLDTVKMDVTRLLMTVRIRSTEEVTQAAEALEEKAEAISNLTYTHPTEDGGVAVEADPATEVANRMAEVPRAGRNDPCPCGSGKKYKQCHGRLA.

Residues Gln-87, 105–109 (GEGKT), and Asp-516 contribute to the ATP site. The Zn(2+) site is built by Cys-902, Cys-904, Cys-913, and His-914.

This sequence belongs to the SecA family. Monomer and homodimer. Part of the essential Sec protein translocation apparatus which comprises SecA, SecYEG and auxiliary proteins SecDF-YajC and YidC. Zn(2+) is required as a cofactor.

The protein localises to the cell inner membrane. The protein resides in the cytoplasm. The catalysed reaction is ATP + H2O + cellular proteinSide 1 = ADP + phosphate + cellular proteinSide 2.. Its function is as follows. Part of the Sec protein translocase complex. Interacts with the SecYEG preprotein conducting channel. Has a central role in coupling the hydrolysis of ATP to the transfer of proteins into and across the cell membrane, serving both as a receptor for the preprotein-SecB complex and as an ATP-driven molecular motor driving the stepwise translocation of polypeptide chains across the membrane. This chain is Protein translocase subunit SecA, found in Methylibium petroleiphilum (strain ATCC BAA-1232 / LMG 22953 / PM1).